Reading from the N-terminus, the 323-residue chain is 4-hydroxy-3-methylbut-2-enyl diphosphate reductase (323 aa).

Cysteine 12 contacts [4Fe-4S] cluster. (2E)-4-hydroxy-3-methylbut-2-enyl diphosphate contacts are provided by histidine 43 and histidine 81. Dimethylallyl diphosphate is bound by residues histidine 43 and histidine 81. Isopentenyl diphosphate-binding residues include histidine 43 and histidine 81. Residue cysteine 103 participates in [4Fe-4S] cluster binding. Residue histidine 131 coordinates (2E)-4-hydroxy-3-methylbut-2-enyl diphosphate. Dimethylallyl diphosphate is bound at residue histidine 131. Histidine 131 contacts isopentenyl diphosphate. Glutamate 133 serves as the catalytic Proton donor. Threonine 170 provides a ligand contact to (2E)-4-hydroxy-3-methylbut-2-enyl diphosphate. Cysteine 198 serves as a coordination point for [4Fe-4S] cluster. 3 residues coordinate (2E)-4-hydroxy-3-methylbut-2-enyl diphosphate: serine 226, asparagine 228, and serine 271. Dimethylallyl diphosphate-binding residues include serine 226, asparagine 228, and serine 271. Residues serine 226, asparagine 228, and serine 271 each contribute to the isopentenyl diphosphate site.

The protein belongs to the IspH family. [4Fe-4S] cluster is required as a cofactor.

The catalysed reaction is isopentenyl diphosphate + 2 oxidized [2Fe-2S]-[ferredoxin] + H2O = (2E)-4-hydroxy-3-methylbut-2-enyl diphosphate + 2 reduced [2Fe-2S]-[ferredoxin] + 2 H(+). It catalyses the reaction dimethylallyl diphosphate + 2 oxidized [2Fe-2S]-[ferredoxin] + H2O = (2E)-4-hydroxy-3-methylbut-2-enyl diphosphate + 2 reduced [2Fe-2S]-[ferredoxin] + 2 H(+). Its pathway is isoprenoid biosynthesis; dimethylallyl diphosphate biosynthesis; dimethylallyl diphosphate from (2E)-4-hydroxy-3-methylbutenyl diphosphate: step 1/1. The protein operates within isoprenoid biosynthesis; isopentenyl diphosphate biosynthesis via DXP pathway; isopentenyl diphosphate from 1-deoxy-D-xylulose 5-phosphate: step 6/6. In terms of biological role, catalyzes the conversion of 1-hydroxy-2-methyl-2-(E)-butenyl 4-diphosphate (HMBPP) into a mixture of isopentenyl diphosphate (IPP) and dimethylallyl diphosphate (DMAPP). Acts in the terminal step of the DOXP/MEP pathway for isoprenoid precursor biosynthesis. The protein is 4-hydroxy-3-methylbut-2-enyl diphosphate reductase of Lysinibacillus sphaericus (strain C3-41).